The primary structure comprises 501 residues: LIM domain-containing protein HDR3 (501 aa).

A disordered region spans residues 33-67; sequence GEANRRRPRVTAGEETTLWEEPVRPKKEEPPRHNN. Over residues 53–67 the composition is skewed to basic and acidic residues; the sequence is EPVRPKKEEPPRHNN. UIM domains follow at residues 65–84 and 94–113; these read HNNEEMDHALALALADDAKN and ENDEELARAIQDSLNMNPYQ. In terms of domain architecture, LIM zinc-binding spans 131-191; that stretch reads RVCGGCKHEI…KLCYKELHHP (61 aa). The tract at residues 429 to 448 is disordered; sequence YASSSSSSCRPPPSKKGGIS.

In terms of assembly, interacts (via N-terminus) with GW6A (via C-terminus).

Functionally, ubiquitin receptor that functions as a positive regulator of grain size and weight. Functions in the same genetic pathway as GW6A to regulate grain size. Modulates grain size in a similar manner to GW6A, by altering cell proliferation in spikelet hulls. Interacts with and enhances the ubiquitination of GW6A. This stabilizes GW6A, delays protein degradation by the 26S proteasome and enhances GW6A histone acetyltransferase activity. This is LIM domain-containing protein HDR3 from Oryza sativa subsp. japonica (Rice).